Reading from the N-terminus, the 380-residue chain is Queuine tRNA-ribosyltransferase (380 aa).

The active-site Proton acceptor is the Asp-95. Residues 95-99 (DSGGF), Asp-149, Gln-192, and Gly-219 contribute to the substrate site. An RNA binding region spans residues 250–256 (GVGSADA). The Nucleophile role is filled by Asp-269. The tract at residues 274 to 278 (TRIAR) is RNA binding; important for wobble base 34 recognition. Residues Cys-307, Cys-309, Cys-312, and His-338 each contribute to the Zn(2+) site.

It belongs to the queuine tRNA-ribosyltransferase family. Homodimer. Within each dimer, one monomer is responsible for RNA recognition and catalysis, while the other monomer binds to the replacement base PreQ1. Zn(2+) is required as a cofactor.

It carries out the reaction 7-aminomethyl-7-carbaguanine + guanosine(34) in tRNA = 7-aminomethyl-7-carbaguanosine(34) in tRNA + guanine. The protein operates within tRNA modification; tRNA-queuosine biosynthesis. Functionally, catalyzes the base-exchange of a guanine (G) residue with the queuine precursor 7-aminomethyl-7-deazaguanine (PreQ1) at position 34 (anticodon wobble position) in tRNAs with GU(N) anticodons (tRNA-Asp, -Asn, -His and -Tyr). Catalysis occurs through a double-displacement mechanism. The nucleophile active site attacks the C1' of nucleotide 34 to detach the guanine base from the RNA, forming a covalent enzyme-RNA intermediate. The proton acceptor active site deprotonates the incoming PreQ1, allowing a nucleophilic attack on the C1' of the ribose to form the product. After dissociation, two additional enzymatic reactions on the tRNA convert PreQ1 to queuine (Q), resulting in the hypermodified nucleoside queuosine (7-(((4,5-cis-dihydroxy-2-cyclopenten-1-yl)amino)methyl)-7-deazaguanosine). The polypeptide is Queuine tRNA-ribosyltransferase (Lactiplantibacillus plantarum (strain ATCC BAA-793 / NCIMB 8826 / WCFS1) (Lactobacillus plantarum)).